The chain runs to 222 residues: Cytidylate kinase (222 aa).

Gly10–Thr18 is an ATP binding site.

It belongs to the cytidylate kinase family. Type 1 subfamily.

It is found in the cytoplasm. It catalyses the reaction CMP + ATP = CDP + ADP. It carries out the reaction dCMP + ATP = dCDP + ADP. The protein is Cytidylate kinase of Halalkalibacterium halodurans (strain ATCC BAA-125 / DSM 18197 / FERM 7344 / JCM 9153 / C-125) (Bacillus halodurans).